The sequence spans 170 residues: Small ribosomal subunit protein uS9 (170 aa).

The tract at residues 1 to 47 (MAETTPEQPLEEIDIDSYTTESEVPVEGEYTSESMASAFGEPQPAAG) is disordered.

It belongs to the universal ribosomal protein uS9 family.

The sequence is that of Small ribosomal subunit protein uS9 (rpsI) from Streptomyces coelicolor (strain ATCC BAA-471 / A3(2) / M145).